We begin with the raw amino-acid sequence, 327 residues long: tRNA dimethylallyltransferase (327 aa).

18 to 25 (GPTASGKT) contributes to the ATP binding site. Position 20 to 25 (20 to 25 (TASGKT)) interacts with substrate. Interaction with substrate tRNA stretches follow at residues 43–46 (DSAL), 167–171 (QRVQR), and 251–256 (RCVGYR).

It belongs to the IPP transferase family. In terms of assembly, monomer. Mg(2+) is required as a cofactor.

It catalyses the reaction adenosine(37) in tRNA + dimethylallyl diphosphate = N(6)-dimethylallyladenosine(37) in tRNA + diphosphate. Its function is as follows. Catalyzes the transfer of a dimethylallyl group onto the adenine at position 37 in tRNAs that read codons beginning with uridine, leading to the formation of N6-(dimethylallyl)adenosine (i(6)A). The chain is tRNA dimethylallyltransferase from Methylibium petroleiphilum (strain ATCC BAA-1232 / LMG 22953 / PM1).